The primary structure comprises 120 residues: NAD(P)H-quinone oxidoreductase subunit 3, chloroplastic (120 aa).

A run of 3 helical transmembrane segments spans residues 9–29, 64–84, and 88–108; these read IFWA…LISG, MFAL…PWAM, and VLGV…IVGS.

Belongs to the complex I subunit 3 family. NDH is composed of at least 16 different subunits, 5 of which are encoded in the nucleus.

Its subcellular location is the plastid. It is found in the chloroplast thylakoid membrane. The enzyme catalyses a plastoquinone + NADH + (n+1) H(+)(in) = a plastoquinol + NAD(+) + n H(+)(out). The catalysed reaction is a plastoquinone + NADPH + (n+1) H(+)(in) = a plastoquinol + NADP(+) + n H(+)(out). Functionally, NDH shuttles electrons from NAD(P)H:plastoquinone, via FMN and iron-sulfur (Fe-S) centers, to quinones in the photosynthetic chain and possibly in a chloroplast respiratory chain. The immediate electron acceptor for the enzyme in this species is believed to be plastoquinone. Couples the redox reaction to proton translocation, and thus conserves the redox energy in a proton gradient. The protein is NAD(P)H-quinone oxidoreductase subunit 3, chloroplastic of Platanus occidentalis (Sycamore).